An 811-amino-acid polypeptide reads, in one-letter code: MAQQQAGARGSKLEIVAARGGSGGSSSAGDAEAPPLDVLRQDSLYRDATRPAHGHHGQESWMRTLRLGFQCVGILHADLGTSPLYVYQNTFKYGIKHEDDIIGVLSLIIYSFVLFTMVKIVFIALHANDDGDGGTFALYSLISRYAKVCLIPNQQAEDELVTRYNDHGKPPATLRRAQWMKSQLEKKPAKIAVFFLTIFATALAISDCVLNPSVSVLSAVNGLKLRAPHLTTDEVVWITVGILVVFFAVQRFGTDKIGYTFAPVVVVWLLLISGIGIYDLVKYDVGVLRAFNPKYIIDYFRRNKKDGWVQLGEVLLTFTGTEALFADLGYFSIKSIQLSSTFVLLPSVLCTYIGQAAYLRKHMDQQHIQNAFFNSIPRPLFWPMFVLAIMTSVIGCQAMVSCAFATMSHLQTLNCFPRIKILHTSRRYSGQLYSPEVNFFLCLLSCVITLSFRTTGFIVKAHEICVVLVMVITTILMTIVMLLVWKVNIWWIVLFFVVFMSTETVYLSAVLYKFTKGPYMPLAMSAVLMVIMFVWHYVHVKRYKFELEHTVSPNKVRELLERRDLKRVPGVGLFYTELVQGIPPIFPHLIEKIPTIHSVIVFISMKHLPIPHVDVSERFLFRQVEPKECMVFRCVARYGYRDTLEMADDFVTTLVEYLQYYIRDLNLYNTVEPLKMSCPSIRIDSFSWDRRPSGHGIYAEEMLTPIQSFSELTMHPVGMSSRLAQFQTTKMSLEEMLKIEEDQKLIQREVDNGVVYILGESEVVAKPHSNLLKKVVVNYIFNFLRKNSRKGEKMLSIPRRKLLKVGITYEI.

Over 1–66 (MAQQQAGARG…GQESWMRTLR (66 aa)) the chain is Cytoplasmic. Residues 67–87 (LGFQCVGILHADLGTSPLYVY) form a helical membrane-spanning segment. Over 88–100 (QNTFKYGIKHEDD) the chain is Extracellular. A helical membrane pass occupies residues 101 to 121 (IIGVLSLIIYSFVLFTMVKIV). Over 122 to 190 (FIALHANDDG…KSQLEKKPAK (69 aa)) the chain is Cytoplasmic. A helical transmembrane segment spans residues 191-211 (IAVFFLTIFATALAISDCVLN). Residues 212-228 (PSVSVLSAVNGLKLRAP) are Extracellular-facing. A helical transmembrane segment spans residues 229–249 (HLTTDEVVWITVGILVVFFAV). The Cytoplasmic segment spans residues 250 to 256 (QRFGTDK). Residues 257 to 277 (IGYTFAPVVVVWLLLISGIGI) traverse the membrane as a helical segment. At 278 to 310 (YDLVKYDVGVLRAFNPKYIIDYFRRNKKDGWVQ) the chain is on the extracellular side. Residues 311–331 (LGEVLLTFTGTEALFADLGYF) traverse the membrane as a helical segment. Topologically, residues 332–337 (SIKSIQ) are cytoplasmic. Residues 338 to 358 (LSSTFVLLPSVLCTYIGQAAY) form a helical membrane-spanning segment. Residues 359–379 (LRKHMDQQHIQNAFFNSIPRP) lie on the Extracellular side of the membrane. A helical transmembrane segment spans residues 380–400 (LFWPMFVLAIMTSVIGCQAMV). At 401 to 438 (SCAFATMSHLQTLNCFPRIKILHTSRRYSGQLYSPEVN) the chain is on the cytoplasmic side. A helical transmembrane segment spans residues 439-459 (FFLCLLSCVITLSFRTTGFIV). The Extracellular segment spans residues 460-463 (KAHE). The chain crosses the membrane as a helical span at residues 464-484 (ICVVLVMVITTILMTIVMLLV). Residues 485 to 488 (WKVN) are Cytoplasmic-facing. A helical membrane pass occupies residues 489-509 (IWWIVLFFVVFMSTETVYLSA). The Extracellular segment spans residues 510–519 (VLYKFTKGPY). Residues 520 to 540 (MPLAMSAVLMVIMFVWHYVHV) traverse the membrane as a helical segment. The Cytoplasmic segment spans residues 541-811 (KRYKFELEHT…LLKVGITYEI (271 aa)).

The protein belongs to the HAK/KUP transporter (TC 2.A.72.3) family.

Its subcellular location is the membrane. High-affinity potassium transporter. The protein is Probable potassium transporter 16 (HAK16) of Oryza sativa subsp. japonica (Rice).